A 213-amino-acid chain; its full sequence is C-type lectin domain family 4 member C (213 aa).

Topologically, residues 1–21 are cytoplasmic; the sequence is MVPEEEPQDREKGLWWFQLKV. The chain crosses the membrane as a helical; Signal-anchor for type II membrane protein span at residues 22–44; it reads WSMAVVSILLLSVCFTVSSVVPH. At 45-213 the chain is on the extracellular side; the sequence is NFMYSKTVKR…SICKMKKIYI (169 aa). 2 cysteine pairs are disulfide-bonded: cysteine 70-cysteine 82 and cysteine 83-cysteine 94. Residues 90–207 enclose the C-type lectin domain; that stretch reads FQSSCYFIST…CHVPQKSICK (118 aa). N-linked (GlcNAc...) asparagine glycosylation is found at asparagine 110 and asparagine 137. Cystine bridges form between cysteine 111–cysteine 206 and cysteine 180–cysteine 198. Serine 139 is an a carbohydrate binding site. Asparagine 164 carries N-linked (GlcNAc...) asparagine glycosylation. Ca(2+) contacts are provided by glutamate 172, asparagine 174, and glutamate 178. Residues glutamate 178, 184–186, asparagine 194, 194–195, and glutamine 202 contribute to the a carbohydrate site; these read NFR and ND. Ca(2+) contacts are provided by asparagine 194 and aspartate 195.

In terms of assembly, homodimer. Expressed in plasmacytoid dendritic cells (PDCs). Constitutively expressed in immature monocyte-derived dendritic cells (iMDDC) and is significantly down-regulated upon maturation with LPS but not with TNF-alpha.

It is found in the cell membrane. Its function is as follows. Lectin-type cell surface receptor which may play a role in antigen capturing by dendritic cells. Specifically recognizes non-sialylated galactose-terminated biantennary glycans containing the trisaccharide epitope Gal(beta1-3/4)GlcNAc(beta1-2)Man. Binds to serum IgG. Efficiently targets ligand into antigen-processing and peptide-loading compartments for presentation to T-cells. May mediate potent inhibition of induction of IFN-alpha/beta expression in plasmacytoid dendritic cells. May act as a signaling receptor that activates protein-tyrosine kinases and mobilizes intracellular calcium. This Homo sapiens (Human) protein is C-type lectin domain family 4 member C (CLEC4C).